Reading from the N-terminus, the 158-residue chain is C-type lectin mannose-binding isoform (158 aa).

A signal peptide spans 1–20 (MGRFLLVTLSMLVVTFSLNE). 3 disulfide bridges follow: Cys-26–Cys-37, Cys-54–Cys-154, and Cys-129–Cys-146. The region spanning 33-155 (KNGFCYKVFN…CEALYHFICQ (123 aa)) is the C-type lectin domain. Positions 119-121 (EPN) match the Mannose-binding motif. Residue Asn-121 is glycosylated (N-linked (GlcNAc...) asparagine). Residues Glu-127, Asn-142, and Asp-143 each contribute to the Ca(2+) site.

The protein belongs to the true venom lectin family. In terms of assembly, homodimer; disulfide-linked. Expressed by the venom gland.

It localises to the secreted. Its function is as follows. Mannose-binding lectin that binds to and agglutinates erythrocytes in a calcium-dependent manner. This Notechis scutatus scutatus (Mainland tiger snake) protein is C-type lectin mannose-binding isoform.